A 140-amino-acid polypeptide reads, in one-letter code: ATP synthase epsilon chain (140 aa).

This sequence belongs to the ATPase epsilon chain family. As to quaternary structure, F-type ATPases have 2 components, CF(1) - the catalytic core - and CF(0) - the membrane proton channel. CF(1) has five subunits: alpha(3), beta(3), gamma(1), delta(1), epsilon(1). CF(0) has three main subunits: a, b and c.

It is found in the cell inner membrane. Its function is as follows. Produces ATP from ADP in the presence of a proton gradient across the membrane. This Yersinia pseudotuberculosis serotype O:1b (strain IP 31758) protein is ATP synthase epsilon chain.